The primary structure comprises 277 residues: Sulfur carrier protein FdhD (277 aa).

Cysteine 121 (cysteine persulfide intermediate) is an active-site residue. Position 260 to 265 (260 to 265 (FCKPGR)) interacts with Mo-bis(molybdopterin guanine dinucleotide).

This sequence belongs to the FdhD family.

The protein resides in the cytoplasm. Functionally, required for formate dehydrogenase (FDH) activity. Acts as a sulfur carrier protein that transfers sulfur from IscS to the molybdenum cofactor prior to its insertion into FDH. The chain is Sulfur carrier protein FdhD from Escherichia coli O8 (strain IAI1).